A 95-amino-acid chain; its full sequence is Aspartyl/glutamyl-tRNA(Asn/Gln) amidotransferase subunit C (95 aa).

This sequence belongs to the GatC family. Heterotrimer of A, B and C subunits.

The catalysed reaction is L-glutamyl-tRNA(Gln) + L-glutamine + ATP + H2O = L-glutaminyl-tRNA(Gln) + L-glutamate + ADP + phosphate + H(+). It carries out the reaction L-aspartyl-tRNA(Asn) + L-glutamine + ATP + H2O = L-asparaginyl-tRNA(Asn) + L-glutamate + ADP + phosphate + 2 H(+). Allows the formation of correctly charged Asn-tRNA(Asn) or Gln-tRNA(Gln) through the transamidation of misacylated Asp-tRNA(Asn) or Glu-tRNA(Gln) in organisms which lack either or both of asparaginyl-tRNA or glutaminyl-tRNA synthetases. The reaction takes place in the presence of glutamine and ATP through an activated phospho-Asp-tRNA(Asn) or phospho-Glu-tRNA(Gln). This is Aspartyl/glutamyl-tRNA(Asn/Gln) amidotransferase subunit C from Rhodospirillum rubrum (strain ATCC 11170 / ATH 1.1.1 / DSM 467 / LMG 4362 / NCIMB 8255 / S1).